A 397-amino-acid polypeptide reads, in one-letter code: Phosphoglycerate kinase (397 aa).

Residues 21 to 23, Arg36, 59 to 62, Arg119, and Arg152 contribute to the substrate site; these read DVN and HFGR. Residues Lys202, Glu324, and 354–357 each bind ATP; that span reads GGDT.

This sequence belongs to the phosphoglycerate kinase family. As to quaternary structure, monomer.

The protein localises to the cytoplasm. It carries out the reaction (2R)-3-phosphoglycerate + ATP = (2R)-3-phospho-glyceroyl phosphate + ADP. It participates in carbohydrate degradation; glycolysis; pyruvate from D-glyceraldehyde 3-phosphate: step 2/5. In Cereibacter sphaeroides (strain ATCC 17025 / ATH 2.4.3) (Rhodobacter sphaeroides), this protein is Phosphoglycerate kinase.